The chain runs to 104 residues: MIPGEFVFGDGDIEINAGAVRLELPIVNTGDRPVQVGSHVHVPQANGALEFDRAAAHGYRFDIPAGTAIRFEPGVAQHVRLIPLGGAREVHGLTLDPPGRLDAS.

This sequence belongs to the urease beta subunit family. In terms of assembly, heterotrimer of UreA (gamma), UreB (beta) and UreC (alpha) subunits. Three heterotrimers associate to form the active enzyme.

It is found in the cytoplasm. It carries out the reaction urea + 2 H2O + H(+) = hydrogencarbonate + 2 NH4(+). It functions in the pathway nitrogen metabolism; urea degradation; CO(2) and NH(3) from urea (urease route): step 1/1. The sequence is that of Urease subunit beta from Mycolicibacterium vanbaalenii (strain DSM 7251 / JCM 13017 / BCRC 16820 / KCTC 9966 / NRRL B-24157 / PYR-1) (Mycobacterium vanbaalenii).